Reading from the N-terminus, the 403-residue chain is Esterase LipC (403 aa).

Catalysis depends on residues Ser-237, Asp-334, and His-367.

This sequence belongs to the 'GDXG' lipolytic enzyme family.

It localises to the cell surface. Its subcellular location is the secreted. It is found in the cell wall. The protein localises to the capsule. The catalysed reaction is a fatty acid ester + H2O = an aliphatic alcohol + a fatty acid + H(+). It carries out the reaction a butanoate ester + H2O = an aliphatic alcohol + butanoate + H(+). It catalyses the reaction a hexanoate ester + H2O = an aliphatic alcohol + hexanoate + H(+). The enzyme catalyses an acetyl ester + H2O = an aliphatic alcohol + acetate + H(+). The catalysed reaction is an octanoate ester + H2O = an aliphatic alcohol + octanoate + H(+). It carries out the reaction decanoate ester + H2O = decanoate + an aliphatic alcohol + H(+). Esterase that can hydrolyze short-chain esters with the carbon chain containing 2 to 10 carbon atoms. Does not have lipase activity. Is highly immunogenic and elicits strong humoral immune responses in both HIV-negative (HIV-) and HIV-positive (HIV+) tuberculosis (TB) patients. Also elicits pro-inflammatory cytokine and chemokine responses from macrophages and pulmonary epithelial cells. May participate in the progression of active tuberculosis both by contributing to the utilization of lipid substrates for bacterial growth and replication, and by modulating immune responses. The chain is Esterase LipC from Mycobacterium tuberculosis (strain ATCC 25618 / H37Rv).